The chain runs to 352 residues: Carbohydrate sulfotransferase 11 (352 aa).

The Cytoplasmic portion of the chain corresponds to 1 to 16; the sequence is MKPALLEVMRMNRICR. A helical; Signal-anchor for type II membrane protein transmembrane segment spans residues 17-37; the sequence is MVLATCLGSFILVIFYFQSML. At 38-352 the chain is on the lumenal side; sequence HPVMRRNPFG…YSVPNYLKLD (315 aa). Residues 124–130 and 186–194 each bind 3'-phosphoadenylyl sulfate; these read PKVACTN and REPFERLVS. Residues Asn205, Asn223, Asn321, and Asn342 are each glycosylated (N-linked (GlcNAc...) asparagine).

Belongs to the sulfotransferase 2 family. N-glycosylated; required for activity and stability.

The protein localises to the golgi apparatus membrane. The catalysed reaction is chondroitin beta-D-glucuronate + n 3'-phosphoadenylyl sulfate = chondroitin 4'-sulfate + n adenosine 3',5'-bisphosphate + n H(+). In terms of biological role, catalyzes the transfer of sulfate to position 4 of the N-acetylgalactosamine (GalNAc) residue of chondroitin. Chondroitin sulfate constitutes the predominant proteoglycan present in cartilage and is distributed on the surfaces of many cells and extracellular matrices. Can also sulfate Gal residues in desulfated dermatan sulfate. Preferentially sulfates in GlcA-&gt;GalNAc unit than in IdoA-&gt;GalNAc unit. Does not form 4, 6-di-O-sulfated GalNAc when chondroitin sulfate C is used as an acceptor. In Rattus norvegicus (Rat), this protein is Carbohydrate sulfotransferase 11 (Chst11).